The following is a 496-amino-acid chain: Probable chlorophyll(ide) b reductase NYC1, chloroplastic (496 aa).

The transit peptide at 1 to 43 (MTTLTKIQVYPQVLEHRLFFRDPIRVGSRLTCRERSNRVYVHR) directs the protein to the chloroplast. The next 2 membrane-spanning stretches (helical) occupy residues 105–125 (YIVT…LSGG) and 132–152 (LVWY…ANMV). Residue 166 to 190 (ITGSTRGLGKALAREFLLSGDRVIV) participates in NAD(+) binding. Positions 195-224 (SESVDMTVKELEQNLKEIMSNASESARKKL) form a coiled coil. Tyrosine 330 (proton acceptor) is an active-site residue. Residues 470 to 490 (WVSVFSLSVVCAFIILQSTTP) traverse the membrane as a helical segment.

This sequence belongs to the short-chain dehydrogenases/reductases (SDR) family. As to quaternary structure, interacts with NOL to form a complex that acts as a chlorophyll b reductase. Interacts with HCAR, RCCR, SGR1 and the LHCII complex. Part of a SGR1-CCE-LHCII complex, which acts in chlorophyll breakdown.

The protein resides in the plastid. The protein localises to the chloroplast thylakoid membrane. The catalysed reaction is 7(1)-hydroxychlorophyllide a + NAD(+) = chlorophyllide b + NADH + H(+). The enzyme catalyses 7(1)-hydroxychlorophyllide a + NADP(+) = chlorophyllide b + NADPH + H(+). In terms of biological role, involved in chlorophyll b degradation. Belongs to the chlorophyll catabolic enzymes (CCEs). This is Probable chlorophyll(ide) b reductase NYC1, chloroplastic (NYC1) from Arabidopsis thaliana (Mouse-ear cress).